An 88-amino-acid polypeptide reads, in one-letter code: MAEAEKTVRTLTGRVVSDKMDKTITVLIERRVKHPIYGKYVKRSTKLHAHDETNQCHIGDKVTIRETRPVAKTKSWALVDILERAVEV.

The protein belongs to the universal ribosomal protein uS17 family. Part of the 30S ribosomal subunit.

One of the primary rRNA binding proteins, it binds specifically to the 5'-end of 16S ribosomal RNA. The polypeptide is Small ribosomal subunit protein uS17 (Pseudomonas savastanoi pv. phaseolicola (strain 1448A / Race 6) (Pseudomonas syringae pv. phaseolicola (strain 1448A / Race 6))).